We begin with the raw amino-acid sequence, 114 residues long: N(4)-acetylcytidine amidohydrolase (114 aa).

An ASCH domain is found at 8-93; that stretch reads TFFEFLTPLV…ALIQEIYPNI (86 aa). K22 serves as the catalytic Proton acceptor. T25 functions as the Nucleophile in the catalytic mechanism. Catalysis depends on E75, which acts as the Proton donor.

The protein belongs to the N(4)-acetylcytidine amidohydrolase family.

The catalysed reaction is N(4)-acetylcytidine + H2O = cytidine + acetate + H(+). It catalyses the reaction N(4)-acetyl-2'-deoxycytidine + H2O = 2'-deoxycytidine + acetate + H(+). It carries out the reaction N(4)-acetylcytosine + H2O = cytosine + acetate + H(+). Its function is as follows. Catalyzes the hydrolysis of N(4)-acetylcytidine (ac4C). In Vibrio cholerae serotype O1 (strain ATCC 39541 / Classical Ogawa 395 / O395), this protein is N(4)-acetylcytidine amidohydrolase.